Consider the following 523-residue polypeptide: WD repeat-containing protein YPL247C (523 aa).

Positions 1–64 are disordered; sequence MDPFHNGNKR…TTNGGNSKRN (64 aa). Over residues 9–40 the composition is skewed to polar residues; it reads KRSSISFGSSQRQPYNKNNYLSGTNGPSSAAQ. Phosphoserine is present on Ser47. Positions 52–64 are enriched in low complexity; the sequence is SGNTTNGGNSKRN. A Phosphoserine modification is found at Ser65. WD repeat units lie at residues 173–213, 241–281, 285–325, and 392–432; these read DVVY…RQFQ, GTFP…YVKT, AHDS…HSTI, and GHGS…MEIN. Positions 436 to 472 are disordered; the sequence is SKSPSIHGTSLEDPDGDTEMTDGGAGSGLNEDPLSLN.

It belongs to the WD repeat WDR68 family.

Its subcellular location is the cytoplasm. The protein localises to the nucleus. The chain is WD repeat-containing protein YPL247C from Saccharomyces cerevisiae (strain ATCC 204508 / S288c) (Baker's yeast).